Reading from the N-terminus, the 53-residue chain is IgW transmembrane form Tm1T3/Tm6T3/Tm3C4 (53 aa).

A disordered region spans residues 1–25 (VQAVPPDVKGEEGKEEVEDMDGDDN). Residues 13-24 (GKEEVEDMDGDD) show a composition bias toward acidic residues. The helical transmembrane segment at 29-49 (VAAFAILFILSFLYSTFVTVV) threads the bilayer.

Expressed in the spleen, pancreas, peripheral blood lymphocytes and at low levels in the epigonal organ.

It is found in the membrane. The polypeptide is IgW transmembrane form Tm1T3/Tm6T3/Tm3C4 (Ginglymostoma cirratum (Nurse shark)).